Reading from the N-terminus, the 363-residue chain is MSASSILDLVREDLRAFAGYSSARTSALQGDVWLNANESAWANPADPDASTRRYPDPQPKGLRSALAALYGCAPEQLLIGRGSDEAIDLLVRGLCVPGRDAVLVTPPVFGMYAVCARLQNAPLVDVPLVDGPDGFRADIPAIVARALASNAKLVFLCSPSNPAGSAIALDQIEQALQALQGKALVVVDEAYGEFSDVPSAVGLLGRYDNLAVLRTLSKAHALAAARIGTLIANAELIALLRRCQAPYPVPTPCAAMAEQALSAPALEVTRRRIAEVRSERERVHEALAQLAGVRQVYPSQGNFLLVRFDDAEAAFQALLDAGVVVRDQRAVPRLADALRITLGTHEQNQRVLSALQRTQEAVA.

Position 218 is an N6-(pyridoxal phosphate)lysine (Lys218).

It belongs to the class-II pyridoxal-phosphate-dependent aminotransferase family. Histidinol-phosphate aminotransferase subfamily. In terms of assembly, homodimer. Pyridoxal 5'-phosphate is required as a cofactor.

The enzyme catalyses L-histidinol phosphate + 2-oxoglutarate = 3-(imidazol-4-yl)-2-oxopropyl phosphate + L-glutamate. It functions in the pathway amino-acid biosynthesis; L-histidine biosynthesis; L-histidine from 5-phospho-alpha-D-ribose 1-diphosphate: step 7/9. This chain is Histidinol-phosphate aminotransferase, found in Xanthomonas euvesicatoria pv. vesicatoria (strain 85-10) (Xanthomonas campestris pv. vesicatoria).